The primary structure comprises 491 residues: Maintenance of mitochondrial morphology protein 1 (491 aa).

Residues 1 to 22 (MTFQQNEPSAVPAQSSLSFTQG) lie on the Lumenal side of the membrane. The chain crosses the membrane as a helical span at residues 23–43 (FLLGQLSVVLLIGAFIKFFIF). The Cytoplasmic segment spans residues 44–491 (GEAPPPPSRG…GTLPGGAAAN (448 aa)). Disordered regions lie at residues 50-95 (PSRG…PVPS), 275-325 (PPLH…SPKS), and 392-491 (RTGV…AAAN). Over residues 54–64 (LSHRASTHRRS) the composition is skewed to basic residues. 2 stretches are compositionally biased toward polar residues: residues 65–78 (NSIYTINPNEGTSR) and 85–95 (STSNVLRPVPS). Residues 131-384 (QPESLDWFNV…EPRVQVVGLP (254 aa)) form the SMP-LTD domain. Positions 275–287 (PPLHTPSPSPSPP) are enriched in pro residues. Polar residues-rich tracts occupy residues 300–315 (TNGSREPTQEAPNAQE) and 403–412 (TGSNAASRSA). A compositionally biased stretch (basic and acidic residues) spans 422–434 (RADDIGREPDGLR).

This sequence belongs to the MMM1 family. In terms of assembly, homodimer. Component of the ER-mitochondria encounter structure (ERMES) or MDM complex, composed of mmm1, mdm10, mdm12 and mdm34. A mmm1 homodimer associates with one molecule of mdm12 on each side in a pairwise head-to-tail manner, and the SMP-LTD domains of mmm1 and mdm12 generate a continuous hydrophobic tunnel for phospholipid trafficking.

The protein localises to the endoplasmic reticulum membrane. Functionally, component of the ERMES/MDM complex, which serves as a molecular tether to connect the endoplasmic reticulum (ER) and mitochondria. Components of this complex are involved in the control of mitochondrial shape and protein biogenesis, and function in nonvesicular lipid trafficking between the ER and mitochondria. The mdm12-mmm1 subcomplex functions in the major beta-barrel assembly pathway that is responsible for biogenesis of all outer membrane beta-barrel proteins, and acts in a late step after the SAM complex. The mdm10-mdm12-mmm1 subcomplex further acts in the TOM40-specific pathway after the action of the mdm12-mmm1 complex. Essential for establishing and maintaining the structure of mitochondria and maintenance of mtDNA nucleoids. This is Maintenance of mitochondrial morphology protein 1 from Aspergillus flavus (strain ATCC 200026 / FGSC A1120 / IAM 13836 / NRRL 3357 / JCM 12722 / SRRC 167).